The chain runs to 525 residues: Acyl-CoA-binding domain-containing protein 5 (525 aa).

Residues 43-132 (HETRFEAAVK…MKKIIETMPM (90 aa)) form the ACB domain. An acyl-CoA is bound by residues 54 to 63 (IQSLPKNGSF), 74 to 78 (YSFYK), Lys-100, and Tyr-119. The segment at 157-216 (RSSDITSDLDNVLTSTPNAKTVNGKAESSDSGAESEEEEAQEEVKGAEQSDNDKKMMKKS) is disordered. The segment covering 158–177 (SSDITSDLDNVLTSTPNAKT) has biased composition (polar residues). A coiled-coil region spans residues 181 to 210 (KAESSDSGAESEEEEAQEEVKGAEQSDNDK). Phosphoserine occurs at positions 184, 185, 187, 191, 206, 270, and 304. The segment covering 198–216 (EEVKGAEQSDNDKKMMKKS) has biased composition (basic and acidic residues). A compositionally biased stretch (basic and acidic residues) spans 367-376 (EVKHGGEDGR). The disordered stretch occupies residues 367-433 (EVKHGGEDGR…ERWGSDRGSR (67 aa)). Ser-419 bears the Phosphoserine mark. The span at 422–432 (DGERWGSDRGS) shows a compositional bias: basic and acidic residues. Positions 438–467 (EQIALVLMRLQEDMQNVLQRLQKLETLTAL) form a coiled coil. At Lys-460 the chain carries N6-acetyllysine. A helical transmembrane segment spans residues 489 to 509 (WWPFEMSPGVLTFAIIWPFIA).

This sequence belongs to the ATG37 family.

Its subcellular location is the peroxisome membrane. In terms of biological role, acyl-CoA binding protein which acts as the peroxisome receptor for pexophagy but is dispensable for aggrephagy and nonselective autophagy. Binds medium- and long-chain acyl-CoA esters. This chain is Acyl-CoA-binding domain-containing protein 5 (ACBD5), found in Pongo abelii (Sumatran orangutan).